We begin with the raw amino-acid sequence, 240 residues long: Probable Ni/Fe-hydrogenase B-type cytochrome subunit (240 aa).

4 helical membrane-spanning segments follow: residues leucine 31–glycine 51, phenylalanine 75–glycine 95, leucine 142–tyrosine 163, and leucine 196–valine 213.

This sequence belongs to the HupC/HyaC/HydC family.

It is found in the cell membrane. Its function is as follows. Probable b-type cytochrome. The sequence is that of Probable Ni/Fe-hydrogenase B-type cytochrome subunit (hoxZ) from Azotobacter vinelandii.